The chain runs to 222 residues: 7-cyano-7-deazaguanine synthase (222 aa).

14–24 lines the ATP pocket; sequence FSGGQDSTTCL. 4 residues coordinate Zn(2+): C190, C199, C202, and C205.

It belongs to the QueC family. In terms of assembly, homodimer. It depends on Zn(2+) as a cofactor.

The enzyme catalyses 7-carboxy-7-deazaguanine + NH4(+) + ATP = 7-cyano-7-deazaguanine + ADP + phosphate + H2O + H(+). The protein operates within purine metabolism; 7-cyano-7-deazaguanine biosynthesis. Its function is as follows. Catalyzes the ATP-dependent conversion of 7-carboxy-7-deazaguanine (CDG) to 7-cyano-7-deazaguanine (preQ(0)). The protein is 7-cyano-7-deazaguanine synthase of Staphylococcus aureus (strain bovine RF122 / ET3-1).